Consider the following 196-residue polypeptide: Ribonuclease HII (196 aa).

Residues 1-196 form the RNase H type-2 domain; sequence MVTIGVDEAG…FAPVAQLQLL (196 aa). Asp-7, Glu-8, and Asp-103 together coordinate a divalent metal cation.

The protein belongs to the RNase HII family. It depends on Mn(2+) as a cofactor. The cofactor is Mg(2+).

The protein localises to the cytoplasm. It carries out the reaction Endonucleolytic cleavage to 5'-phosphomonoester.. Its function is as follows. Endonuclease that specifically degrades the RNA of RNA-DNA hybrids. In Novosphingobium aromaticivorans (strain ATCC 700278 / DSM 12444 / CCUG 56034 / CIP 105152 / NBRC 16084 / F199), this protein is Ribonuclease HII.